The chain runs to 158 residues: MATKTNHIAVVAENRKARHDYDIEETIEAGIVLSGSEIKSVRAGRVNLRGSFARVIDDEVFLYDAHIAPYEQSGKYFNHDPLRPRKLLLHRREINRLNGLVRMKGMTLVPLKIYLKGRRAKVELGIARGKKIYDKREDIARRDAERDIERALKRRIRE.

This sequence belongs to the SmpB family.

It is found in the cytoplasm. Required for rescue of stalled ribosomes mediated by trans-translation. Binds to transfer-messenger RNA (tmRNA), required for stable association of tmRNA with ribosomes. tmRNA and SmpB together mimic tRNA shape, replacing the anticodon stem-loop with SmpB. tmRNA is encoded by the ssrA gene; the 2 termini fold to resemble tRNA(Ala) and it encodes a 'tag peptide', a short internal open reading frame. During trans-translation Ala-aminoacylated tmRNA acts like a tRNA, entering the A-site of stalled ribosomes, displacing the stalled mRNA. The ribosome then switches to translate the ORF on the tmRNA; the nascent peptide is terminated with the 'tag peptide' encoded by the tmRNA and targeted for degradation. The ribosome is freed to recommence translation, which seems to be the essential function of trans-translation. The chain is SsrA-binding protein from Chloroflexus aggregans (strain MD-66 / DSM 9485).